The chain runs to 2103 residues: Zinc finger SWIM domain-containing protein 8 homolog (2103 aa).

The SWIM-type zinc-finger motif lies at 191 to 227 (FNVAVTFDRRRISSCNCTCTSSAYWCSHVVAVCLHRI). Disordered stretches follow at residues 684-860 (DGNR…GSTA), 1237-1262 (SSNPPVRTRSNQPTRREDHDYGGGSG), 1310-1399 (SSGS…IPNQ), 1735-1772 (MQMFISAGPPPPPQAYGGYQQPPPQQPPNPQQQQQVVQ), 1786-1864 (QQVQ…GVGV), and 1888-1916 (PFMQQAPPQPPQQQQPPPSQPPVRQRQPH). Polar residues predominate over residues 724–740 (SALTESDSQSSFDAVSH). 2 stretches are compositionally biased toward low complexity: residues 754–789 (AVGVEQALSTSDTSSASSSSSSASTASGSSNSSTSS) and 835–857 (GRVAMASSGSGSGAGDTVAVGSG). Residues 1237–1249 (SSNPPVRTRSNQP) show a composition bias toward polar residues. Residues 1320-1351 (GMVPTTNAAGTTGTPSSSSTTVSGSQNPNGNP) are compositionally biased toward low complexity. Gly residues predominate over residues 1352-1377 (SGSGGGGNGGGGNGGGGGGGGGGGGS). Over residues 1755 to 1764 (QPPPQQPPNP) the composition is skewed to pro residues. 2 stretches are compositionally biased toward low complexity: residues 1786 to 1813 (QQVQMAGQAPPGHPGQQGHPGQPPSGFQ) and 1820 to 1835 (AFQALPPQAYQAMQAG). Pro residues-rich tracts occupy residues 1836-1859 (PPGPPMGPPQGYYGPPPPPPPNGP) and 1894-1908 (PPQPPQQQQPPPSQP).

It belongs to the ZSWIM8 family. Component of the SCF-like E3 ubiquitin-protein ligase complex.

It functions in the pathway protein modification; protein ubiquitination. Functionally, substrate recognition component of a SCF-like E3 ubiquitin-protein ligase complex that promotes target-directed microRNA degradation (TDMD), a process that mediates degradation of microRNAs (miRNAs). The SCF-like E3 ubiquitin-protein ligase complex acts by catalyzing ubiquitination and subsequent degradation of AGO1, thereby exposing miRNAs for degradation. The chain is Zinc finger SWIM domain-containing protein 8 homolog from Drosophila melanogaster (Fruit fly).